The chain runs to 176 residues: Large ribosomal subunit protein bL17m (176 aa).

Residues methionine 1 to alanine 8 constitute a mitochondrion transit peptide.

The protein belongs to the bacterial ribosomal protein bL17 family. Component of the mitochondrial ribosome large subunit (39S) which comprises a 16S rRNA and about 50 distinct proteins.

The protein resides in the mitochondrion. The sequence is that of Large ribosomal subunit protein bL17m (Mrpl17) from Mus musculus (Mouse).